A 377-amino-acid chain; its full sequence is ATP synthase gamma chain, chloroplastic (377 aa).

The N-terminal 55 residues, 1-55 (MSCSNLTMLVSSKPSLSDSSALSFRSSVSPFQLPNHNTSGPSNPSRSSSVTPVHC), are a transit peptide targeting the chloroplast. The interval 30–52 (PFQLPNHNTSGPSNPSRSSSVTP) is disordered. A compositionally biased stretch (low complexity) spans 37-52 (NTSGPSNPSRSSSVTP). Cysteine 143 is a catalytic residue. Cysteine 253 and cysteine 259 form a disulfide bridge.

Belongs to the ATPase gamma chain family. In terms of assembly, F-type ATPases have 2 components, CF(1) - the catalytic core - and CF(0) - the membrane proton channel. CF(1) has five subunits: alpha(3), beta(3), gamma(1), delta(1), epsilon(1). CF(0) has four main subunits: a, b, b' and c.

It is found in the plastid. Its subcellular location is the chloroplast thylakoid membrane. Functionally, produces ATP from ADP in the presence of a proton gradient across the membrane. The gamma chain is believed to be important in regulating ATPase activity and the flow of protons through the CF(0) complex. The sequence is that of ATP synthase gamma chain, chloroplastic (ATPC) from Nicotiana tabacum (Common tobacco).